The primary structure comprises 302 residues: tRNA dimethylallyltransferase (302 aa).

2-9 provides a ligand contact to ATP; sequence GPTACGKS. 4–9 contributes to the substrate binding site; that stretch reads TACGKS. Interaction with substrate tRNA stretches follow at residues 27–30 and 149–153; these read DSAL and QRLIR.

The protein belongs to the IPP transferase family. As to quaternary structure, monomer. Mg(2+) is required as a cofactor.

The catalysed reaction is adenosine(37) in tRNA + dimethylallyl diphosphate = N(6)-dimethylallyladenosine(37) in tRNA + diphosphate. Catalyzes the transfer of a dimethylallyl group onto the adenine at position 37 in tRNAs that read codons beginning with uridine, leading to the formation of N6-(dimethylallyl)adenosine (i(6)A). This chain is tRNA dimethylallyltransferase, found in Buchnera aphidicola subsp. Acyrthosiphon pisum (strain 5A).